The following is a 920-amino-acid chain: MPLKKLESSNNQDIIAEEVALLKEMLENITRRMIGDDAFTVIESIMVLSEKQDYIELEKVVANISNQEMEVISRYFSILPLLINISEDVDLAYEINYQNNTDTDYLGKLALTIKDLAGKDNGKDILEQVNVVPVLTAHPTQVQRKTILELTTHIHKLLRKYRDAKAGVINLEKWRQELYRYIEMIMQTDIIREKKLQVKNEIKNVMQYYDGSLIQAVTKLTTEYKNLAQKHGLELDNPKPITMGMWIGGDRDGNPFVTAETLCLSATVQSEVILNYYIDELAALYRTFSLSSTLVQPNSEVERLASLSQDQSIYRGNEPYRRAFHYIQSRLKQTQIQLTNQPAARMSSSVGLNTSAWSSPASLENPILAYDSPVDFKADLKAIEQSLLDNGNSALIEGDLREVMQAVDIFGFFLASIDMRQDSSVQEACVAELLKGANIVDDYSSLSETEKCDVLLQQLMEEPRTLSSAAVAKSDLLEKELAIYTTARELKDKLGEEVIKQHIISHTESVSDMFELAIMLKEVGLVDQQRARVQIVPLFETIEDLDNARDIMAAYLSHDIVKSWIATNRNYQEIMLGYSDSNKDGGYLASGWTLYKAQNELTAIGEEHGVKITFFHGRGGTVGRGGGPSYDAITSQPFGSIKDRIRLTEQGEIIENKYGNKDVAYYHLEMLISASINRMVTQMITDPNEIDSFREIMDSIVADSNIIYRKLVFDNPHFYDYFFEASPIKEVSSLNIGSRPAARKTITEITGLRAIPWVFSWSQNRIMFPGWYGVGSAFKRYIDRAQGNLERLQHMYQTWPFFHSLLSNVDMVLSKSNMNIAFQYAQLAERQDVRDVFYEILDEWQLTKNVILAIQDHDDLLEDNPSLKHSLKSRLPYFNVLNYIQIELIKRWRNNQLDENDEKLIHTTINGIATGLRNSG.

Catalysis depends on residues H138 and K583.

It belongs to the PEPCase type 1 family. Mg(2+) serves as cofactor.

It catalyses the reaction oxaloacetate + phosphate = phosphoenolpyruvate + hydrogencarbonate. In terms of biological role, forms oxaloacetate, a four-carbon dicarboxylic acid source for the tricarboxylic acid cycle. This chain is Phosphoenolpyruvate carboxylase, found in Streptococcus pyogenes serotype M1.